We begin with the raw amino-acid sequence, 66 residues long: Large ribosomal subunit protein bL35 (66 aa).

Composition is skewed to basic residues over residues 1-16 (MPKF…RFKR) and 23-45 (KRSH…RQLR). The tract at residues 1–66 (MPKFKTHRAS…RIRQMLSGLK (66 aa)) is disordered.

It belongs to the bacterial ribosomal protein bL35 family.

The protein is Large ribosomal subunit protein bL35 of Latilactobacillus sakei subsp. sakei (strain 23K) (Lactobacillus sakei subsp. sakei).